The primary structure comprises 199 residues: Holliday junction branch migration complex subunit RuvA (199 aa).

A domain I region spans residues 1–63 (MIAYIEGKLA…EDAHTLFGFA (63 aa)). The segment at 64-142 (DLMEKEMFLH…KDALLAGSDS (79 aa)) is domain II. The flexible linker stretch occupies residues 143–151 (KQNFSVSHN). The segment at 151–199 (NSIRSEALTALITLGFTKTVAEKNLDLILKGNSNSFTLEDLIKQALKMS) is domain III.

Belongs to the RuvA family. Homotetramer. Forms an RuvA(8)-RuvB(12)-Holliday junction (HJ) complex. HJ DNA is sandwiched between 2 RuvA tetramers; dsDNA enters through RuvA and exits via RuvB. An RuvB hexamer assembles on each DNA strand where it exits the tetramer. Each RuvB hexamer is contacted by two RuvA subunits (via domain III) on 2 adjacent RuvB subunits; this complex drives branch migration. In the full resolvosome a probable DNA-RuvA(4)-RuvB(12)-RuvC(2) complex forms which resolves the HJ.

It localises to the cytoplasm. The RuvA-RuvB-RuvC complex processes Holliday junction (HJ) DNA during genetic recombination and DNA repair, while the RuvA-RuvB complex plays an important role in the rescue of blocked DNA replication forks via replication fork reversal (RFR). RuvA specifically binds to HJ cruciform DNA, conferring on it an open structure. The RuvB hexamer acts as an ATP-dependent pump, pulling dsDNA into and through the RuvAB complex. HJ branch migration allows RuvC to scan DNA until it finds its consensus sequence, where it cleaves and resolves the cruciform DNA. This Cytophaga hutchinsonii (strain ATCC 33406 / DSM 1761 / CIP 103989 / NBRC 15051 / NCIMB 9469 / D465) protein is Holliday junction branch migration complex subunit RuvA.